Consider the following 90-residue polypeptide: Putative UPF0401 protein YpjI (90 aa).

It belongs to the UPF0401 family.

The protein is Putative UPF0401 protein YpjI (ypjI) of Escherichia coli (strain K12).